We begin with the raw amino-acid sequence, 405 residues long: uncharacterized protein (405 aa).

3 disordered regions span residues 1 to 21 (MSKK…ESKT), 150 to 179 (IKDE…QEGP), and 285 to 405 (DDED…KSRS). The segment covering 7 to 16 (KNASPKNNSD) has biased composition (polar residues). Composition is skewed to acidic residues over residues 312–331 (SDDE…DDEE) and 349–358 (DDEDDEEEGE). 2 stretches are compositionally biased toward basic residues: residues 365–374 (SSKKSSKKAS) and 390–405 (PKKK…KSRS).

This is an uncharacterized protein from Acanthamoeba polyphaga (Amoeba).